Here is a 475-residue protein sequence, read N- to C-terminus: Aspartyl/glutamyl-tRNA(Asn/Gln) amidotransferase subunit B (475 aa).

It belongs to the GatB/GatE family. GatB subfamily. Heterotrimer of A, B and C subunits.

The catalysed reaction is L-glutamyl-tRNA(Gln) + L-glutamine + ATP + H2O = L-glutaminyl-tRNA(Gln) + L-glutamate + ADP + phosphate + H(+). It catalyses the reaction L-aspartyl-tRNA(Asn) + L-glutamine + ATP + H2O = L-asparaginyl-tRNA(Asn) + L-glutamate + ADP + phosphate + 2 H(+). Functionally, allows the formation of correctly charged Asn-tRNA(Asn) or Gln-tRNA(Gln) through the transamidation of misacylated Asp-tRNA(Asn) or Glu-tRNA(Gln) in organisms which lack either or both of asparaginyl-tRNA or glutaminyl-tRNA synthetases. The reaction takes place in the presence of glutamine and ATP through an activated phospho-Asp-tRNA(Asn) or phospho-Glu-tRNA(Gln). The polypeptide is Aspartyl/glutamyl-tRNA(Asn/Gln) amidotransferase subunit B (Thermodesulfovibrio yellowstonii (strain ATCC 51303 / DSM 11347 / YP87)).